A 184-amino-acid chain; its full sequence is Type-1 fimbrial protein, A chain (184 aa).

Positions 1–23 are cleaved as a signal peptide; it reads MKIKTLAIVVLSALSLSSTAALA. Cysteine 46 and cysteine 86 are oxidised to a cystine.

It belongs to the fimbrial protein family.

It localises to the fimbrium. In terms of biological role, fimbriae (also called pili), polar filaments radiating from the surface of the bacterium to a length of 0.5-1.5 micrometers and numbering 100-300 per cell, enable bacteria to colonize the epithelium of specific host organs. The chain is Type-1 fimbrial protein, A chain from Escherichia coli.